The chain runs to 475 residues: Ribulose bisphosphate carboxylase large chain (475 aa).

Positions Met-1–Ser-2 are excised as a propeptide. An N-acetylproline modification is found at Pro-3. At Lys-14 the chain carries N6,N6,N6-trimethyllysine. Residues Asn-123 and Thr-173 each coordinate substrate. The active-site Proton acceptor is the Lys-175. Lys-177 provides a ligand contact to substrate. Mg(2+) contacts are provided by Lys-201, Asp-203, and Glu-204. The residue at position 201 (Lys-201) is an N6-carboxylysine. His-294 acts as the Proton acceptor in catalysis. 3 residues coordinate substrate: Arg-295, His-327, and Ser-379.

It belongs to the RuBisCO large chain family. Type I subfamily. Heterohexadecamer of 8 large chains and 8 small chains; disulfide-linked. The disulfide link is formed within the large subunit homodimers. The cofactor is Mg(2+). Post-translationally, the disulfide bond which can form in the large chain dimeric partners within the hexadecamer appears to be associated with oxidative stress and protein turnover.

It localises to the plastid. The protein localises to the chloroplast. The enzyme catalyses 2 (2R)-3-phosphoglycerate + 2 H(+) = D-ribulose 1,5-bisphosphate + CO2 + H2O. It carries out the reaction D-ribulose 1,5-bisphosphate + O2 = 2-phosphoglycolate + (2R)-3-phosphoglycerate + 2 H(+). Its function is as follows. RuBisCO catalyzes two reactions: the carboxylation of D-ribulose 1,5-bisphosphate, the primary event in carbon dioxide fixation, as well as the oxidative fragmentation of the pentose substrate in the photorespiration process. Both reactions occur simultaneously and in competition at the same active site. The polypeptide is Ribulose bisphosphate carboxylase large chain (Pinus longaeva (Great Basin bristlecone pine)).